Consider the following 363-residue polypeptide: MHKQYHIAVLPGDGIGPEVMQEAYKILQVLREHFSLFIKTKEFDIGGIAIDNHGIALPKKTLIGCENSDAILLGSIGGKKWDTLPINERPERASLLPLRKHFNFFCNLRPSNLYKELNFLSPLRNDIVKHGFDILCVRELTGGIYFGKPRGRVTKKKLMYAFDTEIYYKFEIVRIAHLAFKLARSRKHKLCSIDKANVLESSILWREVVEEVSKEYPDVILSHLYIDNVCMQIIKDPNQFDVLLCSNLFGDIISDECAMITGSIGMLPSASLNEKNFGLYEPAGGSAPDIQGKNIANPIAQILSLSMLIRYSMNLNKIANKIDNAVINVLKKGYKTMDISKDQNYLKTNEMGDVIADFLKRDK.

Glycine 78–glutamate 91 lines the NAD(+) pocket. Residues arginine 99, arginine 109, arginine 138, and aspartate 227 each contribute to the substrate site. Mg(2+) contacts are provided by aspartate 227, aspartate 251, and aspartate 255. Glycine 285 to asparagine 297 provides a ligand contact to NAD(+).

This sequence belongs to the isocitrate and isopropylmalate dehydrogenases family. LeuB type 1 subfamily. In terms of assembly, homodimer. Mg(2+) is required as a cofactor. Mn(2+) serves as cofactor.

It localises to the cytoplasm. The catalysed reaction is (2R,3S)-3-isopropylmalate + NAD(+) = 4-methyl-2-oxopentanoate + CO2 + NADH. It functions in the pathway amino-acid biosynthesis; L-leucine biosynthesis; L-leucine from 3-methyl-2-oxobutanoate: step 3/4. Functionally, catalyzes the oxidation of 3-carboxy-2-hydroxy-4-methylpentanoate (3-isopropylmalate) to 3-carboxy-4-methyl-2-oxopentanoate. The product decarboxylates to 4-methyl-2 oxopentanoate. This chain is 3-isopropylmalate dehydrogenase, found in Buchnera aphidicola subsp. Diuraphis noxia.